The following is a 657-amino-acid chain: Autophagy-related protein 22 (657 aa).

Residues 1-15 (MAPNLQPQPQSQLQR) show a composition bias toward low complexity. The tract at residues 1-78 (MAPNLQPQPQ…VVPRHFGHDA (78 aa)) is disordered. Residues 1–91 (MAPNLQPQPQ…SRRELLGWYA (91 aa)) lie on the Cytoplasmic side of the membrane. A compositionally biased stretch (polar residues) spans 26-40 (GLSNISKRSFRSCAT). The chain crosses the membrane as a helical span at residues 92-112 (YAFAAETYVICGIASFIPILL). The Vacuolar portion of the chain corresponds to 113–155 (ETLARENGVLVSDRKTPCGSSDSKNDGDGQCIVWVFGMEINTA). A helical transmembrane segment spans residues 156–176 (SFAMYTFSVSVLVQALLVVSI). Topologically, residues 177-187 (SCAADHGNYRK) are cytoplasmic. Residues 188-208 (KLLLTFAWIGSFAVMSYIFIT) form a helical membrane-spanning segment. At 209-212 (KDNY) the chain is on the vacuolar side. Residues 213 to 233 (ILGALLTVISNTSFGASFVLL) traverse the membrane as a helical segment. Topologically, residues 234–317 (NSFLPLLVRY…ELELSTRISA (84 aa)) are cytoplasmic. The helical transmembrane segment at 318–338 (IGIGTGYIAALFLQCICIGVL) threads the bilayer. Over 339–349 (ISLHNTTWGQR) the chain is Vacuolar. A glycan (N-linked (GlcNAc...) asparagine) is linked at N343. A helical transmembrane segment spans residues 350–370 (VVLFMVGVWWTVFTIPAAMWL). Over 371–384 (RPRPGPPLADNGRK) the chain is Cytoplasmic. Residues 385–405 (GIMAGLAYILYAWKSLFKTIQ) traverse the membrane as a helical segment. Over 406 to 409 (QARR) the chain is Vacuolar. A helical transmembrane segment spans residues 410–430 (LLDIVLFLAGWFLLSDAIATT). Residues 431-446 (SSTAILFAKTQLHMKP) are Cytoplasmic-facing. A helical transmembrane segment spans residues 447–467 (WALGMINVISTTAGVFGAFGW). The Vacuolar portion of the chain corresponds to 468-481 (SWVSRLFNLKAHQT). The chain crosses the membrane as a helical span at residues 482–502 (ILVCIALFELIPLYGLLGYLP). The Cytoplasmic segment spans residues 503–515 (FVKNWGVFGLQQP). A helical membrane pass occupies residues 516–536 (WEMYPLAAVYGVVLGGLSGYC). The Vacuolar segment spans residues 537–554 (RSLYGELIPPGSEAAFYA). The helical transmembrane segment at 555 to 575 (LYAITDKGSSVFGPTIVGAII) threads the bilayer. At 576-583 (DRTGTIRP) the chain is on the cytoplasmic side. The chain crosses the membrane as a helical span at residues 584–604 (AFWFLAVLVGFPAPLIWFIDV). The Vacuolar portion of the chain corresponds to 605 to 657 (ERGRREGAKLAKSITDSIVQEEDESDDGAERRGMLSDYEREHGQSIDDERAGR). The disordered stretch occupies residues 615–657 (AKSITDSIVQEEDESDDGAERRGMLSDYEREHGQSIDDERAGR). Positions 632-657 (GAERRGMLSDYEREHGQSIDDERAGR) are enriched in basic and acidic residues.

Belongs to the ATG22 family.

Its subcellular location is the vacuole membrane. Functionally, vacuolar effluxer which mediate the efflux of leucine and other amino acids resulting from autophagic degradation. The release of autophagic amino acids allows the maintenance of protein synthesis and viability during nitrogen starvation. Autophagy is required for proper vegetative growth, asexual/sexual reproduction, and full virulence. Autophagy is particularly involved in the biosynthesis of deoxynivalenol (DON), an important virulence determinant. The sequence is that of Autophagy-related protein 22 from Gibberella zeae (strain ATCC MYA-4620 / CBS 123657 / FGSC 9075 / NRRL 31084 / PH-1) (Wheat head blight fungus).